The following is a 236-amino-acid chain: Aminopyrimidine aminohydrolase (236 aa).

D44 provides a ligand contact to substrate. The Nucleophile role is filled by C135. Positions 139 and 163 each coordinate substrate. The active-site Proton donor is the E205.

It belongs to the TenA family. As to quaternary structure, homotetramer.

The enzyme catalyses 4-amino-5-aminomethyl-2-methylpyrimidine + H2O = 4-amino-5-hydroxymethyl-2-methylpyrimidine + NH4(+). It catalyses the reaction thiamine + H2O = 5-(2-hydroxyethyl)-4-methylthiazole + 4-amino-5-hydroxymethyl-2-methylpyrimidine + H(+). It participates in cofactor biosynthesis; thiamine diphosphate biosynthesis. Catalyzes an amino-pyrimidine hydrolysis reaction at the C5' of the pyrimidine moiety of thiamine compounds, a reaction that is part of a thiamine salvage pathway. Thus, catalyzes the conversion of 4-amino-5-aminomethyl-2-methylpyrimidine to 4-amino-5-hydroxymethyl-2-methylpyrimidine (HMP). To a lesser extent, is also able to catalyze the hydrolytic cleavage of thiamine; however, this thiaminase activity is unlikely to be physiologically relevant. Therefore, is involved in the regeneration of the thiamine pyrimidine from thiamine degraded products present in the environment, rather than in thiamine degradation. The protein is Aminopyrimidine aminohydrolase of Bacillus subtilis (strain 168).